A 341-amino-acid chain; its full sequence is uncharacterized protein (341 aa).

A run of 3 helical transmembrane segments spans residues 6 to 26, 63 to 83, and 137 to 157; these read IIAGLLLLTAGMIDFLWTTLW, LLLCLTLVIWISLFWSGWVLI, and AQGLLTITFSVTYLISVLSAV.

Its subcellular location is the cell membrane. This is an uncharacterized protein from Bacillus subtilis (strain 168).